Consider the following 1047-residue polypeptide: [F-actin]-monooxygenase MICAL1 (1047 aa).

The segment at 1-489 (MASPTSTNPA…QDLYDIMDKE (489 aa)) is monooxygenase domain. Residues C95, 114 to 116 (EKR), 121 to 123 (RHN), F181, Y293, and D393 contribute to the FAD site. Residue T475 is modified to Phosphothreonine. Positions 507–611 (SAGTEELLHW…YLSHFHSAFK (105 aa)) constitute a Calponin-homology (CH) domain. Position 616 is a phosphoserine (S616). The interval 644-672 (RTKVEEETPCTEEPPVSEPSVPPALPSEH) is disordered. A compositionally biased stretch (pro residues) spans 659-668 (VSEPSVPPAL). Residues 679–741 (DVCELCGKRL…LQHLPQEDQK (63 aa)) form the LIM zinc-binding domain. Residues C681, C684, H702, C705, C708, C711, C731, and H734 each coordinate Zn(2+). Disordered stretches follow at residues 739-787 (DQKE…QPAR) and 849-872 (EKGEEEEEEEEEEEEEEEELPPPL). Residues 745 to 767 (NNGSPENQELPTPGDSTTQSGPS) are compositionally biased toward polar residues. Phosphoserine is present on residues S777 and S781. Acidic residues predominate over residues 851–868 (GEEEEEEEEEEEEEEEEL). Residues 905 to 1047 (KEEEMKRFCK…EERRLREMPV (143 aa)) form the bMERB domain. Residues 912 to 996 (FCKAQAIQRR…LEEKQRQLDH (85 aa)) are a coiled coil.

This sequence belongs to the Mical family. In terms of assembly, interacts with STK38 and STK38L. Associates with the SH3 domain of NEDD9. Interacts with VIM and PLXNA3. Interacts with RAB1B, RAB8A, RAB10, RAB13 and RAB15 (in their GTP-bound forms); binding to RAB1B is of low affinity compared to other Rab proteins; at least in case of RAB8A and RAB10 can bind 2 molecules of the Rab proteins simultaneously. Interacts with GRAF1/ARHGAP26, GRAF2/ARHGAP10, RAB8A, RAB8B and RAB10; may bind simultaneously to GRAFs and Rabs and connects GRAFs to Rabs. Does not interact with RAB1 and RAB11A. Requires FAD as cofactor.

The protein resides in the cytoplasm. It is found in the cytoskeleton. It localises to the endosome membrane. The protein localises to the midbody. It catalyses the reaction L-methionyl-[F-actin] + NADPH + O2 + H(+) = L-methionyl-(R)-S-oxide-[F-actin] + NADP(+) + H2O. The enzyme catalyses NADPH + O2 + H(+) = H2O2 + NADP(+). Functionally, monooxygenase that promotes depolymerization of F-actin by mediating oxidation of specific methionine residues on actin to form methionine-sulfoxide, resulting in actin filament disassembly and preventing repolymerization. In the absence of actin, it also functions as a NADPH oxidase producing H(2)O(2). Acts as a cytoskeletal regulator that connects NEDD9 to intermediate filaments. Also acts as a negative regulator of apoptosis via its interaction with STK38 and STK38L; acts by antagonizing STK38 and STK38L activation by MST1/STK4. Involved in regulation of lamina-specific connectivity in the nervous system such as the development of lamina-restricted hippocampal connections. Through redox regulation of the actin cytoskeleton controls the intracellular distribution of secretory vesicles containing L1/neurofascin/NgCAM family proteins in neurons, thereby regulating their cell surface levels. May act as Rab effector protein and play a role in vesicle trafficking. Promotes endosomal tubule extension by associating with RAB8 (RAB8A or RAB8B), RAB10 and GRAF (GRAF1/ARHGAP26 or GRAF2/ARHGAP10) on the endosomal membrane which may connect GRAFs to Rabs, thereby participating in neosynthesized Rab8-Rab10-Rab11-dependent protein export. The chain is [F-actin]-monooxygenase MICAL1 (Mical1) from Rattus norvegicus (Rat).